Here is a 154-residue protein sequence, read N- to C-terminus: Cindoxin (154 aa).

In terms of domain architecture, Flavodoxin-like spans 3-145 (ALILYGTETG…TAEEWAREIL (143 aa)). FMN is bound by residues 9-13 (TETGN) and 89-120 (VFGLGDSYYTTFNQAGATAATILASLGGTQVG).

It depends on FMN as a cofactor.

Its function is as follows. Involved in the degradation of cineol (eucalyptol). The FMN protein, cindoxin, shuttles electrons between the FAD-containing cindoxin reductase (CinB) and 1,8-cineole 2-endo-monooxygenase (CinA). This chain is Cindoxin (cinC), found in Citrobacter braakii.